We begin with the raw amino-acid sequence, 60 residues long: Large ribosomal subunit protein bL32 (60 aa).

The interval 1-60 (MAVQQNKKSPSKRGMHRSHNALTVPGIAVESTTGETHLRHHISPTGFYRGRKVLKTKSEA) is disordered. Composition is skewed to basic residues over residues 9-19 (SPSKRGMHRSH) and 49-60 (RGRKVLKTKSEA).

Belongs to the bacterial ribosomal protein bL32 family.

The chain is Large ribosomal subunit protein bL32 from Polaromonas sp. (strain JS666 / ATCC BAA-500).